A 373-amino-acid polypeptide reads, in one-letter code: Spermidine/putrescine import ATP-binding protein PotA (373 aa).

An ABC transporter domain is found at F8–V238. An ATP-binding site is contributed by G40–T47.

Belongs to the ABC transporter superfamily. Spermidine/putrescine importer (TC 3.A.1.11.1) family. As to quaternary structure, the complex is composed of two ATP-binding proteins (PotA), two transmembrane proteins (PotB and PotC) and a solute-binding protein (PotD).

The protein localises to the cell inner membrane. The catalysed reaction is ATP + H2O + polyamine-[polyamine-binding protein]Side 1 = ADP + phosphate + polyamineSide 2 + [polyamine-binding protein]Side 1.. In terms of biological role, part of the ABC transporter complex PotABCD involved in spermidine/putrescine import. Responsible for energy coupling to the transport system. The protein is Spermidine/putrescine import ATP-binding protein PotA of Oleidesulfovibrio alaskensis (strain ATCC BAA-1058 / DSM 17464 / G20) (Desulfovibrio alaskensis).